Reading from the N-terminus, the 160-residue chain is Cytochrome b6-f complex subunit 4 (160 aa).

3 consecutive transmembrane segments (helical) span residues 36–56 (ILYMFPICILGALGLIAGLAI), 95–115 (LLGIAGMAAIPLGLMLVPFIE), and 127–147 (PIAMTVFLFGTAAALWLGAGA).

The protein belongs to the cytochrome b family. PetD subfamily. In terms of assembly, the 4 large subunits of the cytochrome b6-f complex are cytochrome b6, subunit IV (17 kDa polypeptide, PetD), cytochrome f and the Rieske protein, while the 4 small subunits are PetG, PetL, PetM and PetN. The complex functions as a dimer.

It is found in the cellular thylakoid membrane. In terms of biological role, component of the cytochrome b6-f complex, which mediates electron transfer between photosystem II (PSII) and photosystem I (PSI), cyclic electron flow around PSI, and state transitions. The chain is Cytochrome b6-f complex subunit 4 from Synechocystis sp. (strain ATCC 27184 / PCC 6803 / Kazusa).